A 283-amino-acid chain; its full sequence is Poly(3-hydroxyalkanoate) depolymerase (283 aa).

Residues 30–253 form the AB hydrolase-1 domain; sequence PLLIFNGIGA…IDDGHLFLIT (224 aa). The active-site Charge relay system is Ser-102.

It belongs to the AB hydrolase superfamily. Lipase family.

Functionally, complements a mutant that does not degrade PHA; might be a lipase. This Ectopseudomonas oleovorans (Pseudomonas oleovorans) protein is Poly(3-hydroxyalkanoate) depolymerase.